Consider the following 388-residue polypeptide: Succinate--CoA ligase [ADP-forming] subunit beta (388 aa).

The region spanning 9–244 (KGVLSSFGVT…PDEYAAEELE (236 aa)) is the ATP-grasp domain. ATP is bound by residues lysine 46, 53–55 (GRG), glutamate 99, valine 102, and glutamate 107. Asparagine 199 and aspartate 213 together coordinate Mg(2+). Substrate contacts are provided by residues asparagine 264 and 320–322 (GIM).

It belongs to the succinate/malate CoA ligase beta subunit family. In terms of assembly, heterotetramer of two alpha and two beta subunits. The cofactor is Mg(2+).

The catalysed reaction is succinate + ATP + CoA = succinyl-CoA + ADP + phosphate. It carries out the reaction GTP + succinate + CoA = succinyl-CoA + GDP + phosphate. The protein operates within carbohydrate metabolism; tricarboxylic acid cycle; succinate from succinyl-CoA (ligase route): step 1/1. Its function is as follows. Succinyl-CoA synthetase functions in the citric acid cycle (TCA), coupling the hydrolysis of succinyl-CoA to the synthesis of either ATP or GTP and thus represents the only step of substrate-level phosphorylation in the TCA. The beta subunit provides nucleotide specificity of the enzyme and binds the substrate succinate, while the binding sites for coenzyme A and phosphate are found in the alpha subunit. The chain is Succinate--CoA ligase [ADP-forming] subunit beta from Anaplasma marginale (strain St. Maries).